The primary structure comprises 91 residues: YcgL domain-containing protein ESA_01460 (91 aa).

The region spanning 1-85 is the YcgL domain; the sequence is MFCVIYRSAR…PPENLLKQHL (85 aa).

The polypeptide is YcgL domain-containing protein ESA_01460 (Cronobacter sakazakii (strain ATCC BAA-894) (Enterobacter sakazakii)).